A 310-amino-acid polypeptide reads, in one-letter code: MKLFAGNSNRVLAESVAQYLNIPLGKASVRRFADQEIFVEIQENVRGEDVFVLQSTSYPANDHLMELLIMIDAFRRSSARRITAVLPYFGYARQDRKPGPRTPISAKLVANLITEAGASRVLTLDLHAGQIQGFFDIPTDNLYAVPVIARDVKANYATGNCMVVSPDVGGVVRARSLAKRIDAQLAIVDKRRERPGESEVMNVIGDVSGKDCLLFDDIVDSGGTLCNAAEALLNKGANSVTAYITHGVLSGGAVARIASSKLKELVITDSIQPTTAINDAPNIRVLSISDLIGEAIARTAAEESVSSLFD.

Residues 34 to 36 (DQE) and 93 to 94 (RQ) each bind ATP. Histidine 127 and aspartate 167 together coordinate Mg(2+). Residue lysine 190 is part of the active site. D-ribose 5-phosphate-binding positions include arginine 192, aspartate 216, and 220–224 (DSGGT).

Belongs to the ribose-phosphate pyrophosphokinase family. Class I subfamily. As to quaternary structure, homohexamer. Mg(2+) is required as a cofactor.

The protein localises to the cytoplasm. It carries out the reaction D-ribose 5-phosphate + ATP = 5-phospho-alpha-D-ribose 1-diphosphate + AMP + H(+). The protein operates within metabolic intermediate biosynthesis; 5-phospho-alpha-D-ribose 1-diphosphate biosynthesis; 5-phospho-alpha-D-ribose 1-diphosphate from D-ribose 5-phosphate (route I): step 1/1. Involved in the biosynthesis of the central metabolite phospho-alpha-D-ribosyl-1-pyrophosphate (PRPP) via the transfer of pyrophosphoryl group from ATP to 1-hydroxyl of ribose-5-phosphate (Rib-5-P). This is Ribose-phosphate pyrophosphokinase from Brucella melitensis biotype 1 (strain ATCC 23456 / CCUG 17765 / NCTC 10094 / 16M).